The following is an 801-amino-acid chain: Protocadherin beta-8 (801 aa).

The N-terminal stretch at Met-1–Ala-29 is a signal peptide. Residues Glu-30 to Leu-691 lie on the Extracellular side of the membrane. 5 Cadherin domains span residues Val-36–Phe-134, Met-139–Phe-243, Tyr-248–Val-348, Phe-353–Phe-452, and Tyr-457–Val-562. The cysteines at positions 97 and 103 are disulfide-linked. N-linked (GlcNAc...) asparagine glycans are attached at residues Asn-419 and Asn-437. Asn-568 carries N-linked (GlcNAc...) asparagine glycosylation. Residues Gly-569–Leu-672 form the Cadherin 6 domain. A helical transmembrane segment spans residues Val-692–Val-710. Over Ala-711–Lys-801 the chain is Cytoplasmic.

Forms homodimers in trans (molecules expressed by two different cells). Forms promiscuous heterodimers in cis (at the plasma membrane of the same cell) with other protocadherins.

The protein resides in the cell membrane. Calcium-dependent cell-adhesion protein involved in cells self-recognition and non-self discrimination. Thereby, it is involved in the establishment and maintenance of specific neuronal connections in the brain. The sequence is that of Protocadherin beta-8 from Homo sapiens (Human).